A 417-amino-acid polypeptide reads, in one-letter code: Sulfate adenylyltransferase (417 aa).

Positions 1-10 (MTSITANQKP) are enriched in polar residues. Residues 1–20 (MTSITANQKPSKLVPPHGSP) are disordered.

The protein belongs to the sulfate adenylyltransferase family.

It catalyses the reaction sulfate + ATP + H(+) = adenosine 5'-phosphosulfate + diphosphate. Its pathway is sulfur metabolism; hydrogen sulfide biosynthesis; sulfite from sulfate: step 1/3. The sequence is that of Sulfate adenylyltransferase from Psychrobacter arcticus (strain DSM 17307 / VKM B-2377 / 273-4).